We begin with the raw amino-acid sequence, 341 residues long: L-threonine 3-dehydrogenase (341 aa).

Cys38 serves as a coordination point for Zn(2+). Catalysis depends on charge relay system residues Thr40 and His43. Zn(2+) contacts are provided by His63, Glu64, Cys93, Cys96, Cys99, and Cys107. NAD(+)-binding positions include Ile175, Asp195, Arg200, 262 to 264, and 286 to 287; these read LGI and IY.

The protein belongs to the zinc-containing alcohol dehydrogenase family. Homotetramer. Zn(2+) is required as a cofactor.

It is found in the cytoplasm. The enzyme catalyses L-threonine + NAD(+) = (2S)-2-amino-3-oxobutanoate + NADH + H(+). The protein operates within amino-acid degradation; L-threonine degradation via oxydo-reductase pathway; glycine from L-threonine: step 1/2. In terms of biological role, catalyzes the NAD(+)-dependent oxidation of L-threonine to 2-amino-3-ketobutyrate. The sequence is that of L-threonine 3-dehydrogenase from Solibacter usitatus (strain Ellin6076).